Reading from the N-terminus, the 424-residue chain is Tyrosine--tRNA ligase (424 aa).

Residue Tyr-37 participates in L-tyrosine binding. The 'HIGH' region signature appears at 42–51 (PTADSLHLGH). Lys-144 is subject to N6-acetyllysine. Residues Tyr-175 and Gln-179 each coordinate L-tyrosine. A 'KMSKS' region motif is present at residues 235 to 239 (KFGKT). Residue Lys-238 participates in ATP binding. The S4 RNA-binding domain occupies 357–414 (ADLMQALVDSELQPSRGQARKTIASNAITINGEKQSDPEYFFKEEDRLFGRFTLLRRG).

Belongs to the class-I aminoacyl-tRNA synthetase family. TyrS type 1 subfamily. Homodimer.

Its subcellular location is the cytoplasm. The enzyme catalyses tRNA(Tyr) + L-tyrosine + ATP = L-tyrosyl-tRNA(Tyr) + AMP + diphosphate + H(+). In terms of biological role, catalyzes the attachment of tyrosine to tRNA(Tyr) in a two-step reaction: tyrosine is first activated by ATP to form Tyr-AMP and then transferred to the acceptor end of tRNA(Tyr). This Escherichia coli O127:H6 (strain E2348/69 / EPEC) protein is Tyrosine--tRNA ligase.